A 446-amino-acid chain; its full sequence is MAVTITWVKARQIFDSRGNPTVEVDVGLSDGSYARGAVPSGASTGIYEALELRDGGSDYLGKGVLKAVSNVNNIIGPAIVGKDPTEQVEIDNFMVQQLDGTSNEWGWCKQKLGANAILAVSLAVCKAGAMVKKIPLYQHIANLAGNKTLVLPVPAFNVINGGSHAGNKLAMQEFMILPTGASSFKEAMKMGVEVYHNLKSIIKKKYGQDATNVGDEGGFAPNIQENKEGLELLKAAIEKAGYTGKVVIGMDVAASEFFGEKDKTYDLNFKEENNDGSNKISGDSLKDLYKSFVSEYPIESIEDPFDQDDWSTYAKLTDEIGQKVQIVGDDLLVTNPTRVAKAINEKTCNALLLKVNQIGSVTESIEAVRMSKRAGWGVMASHRSGETEDTFIADLSVGLSTGQIKTGAPCRSERLAKYNQLLRIEEELGDAAVYAGAKFRAPVEPY.

Substrate-binding residues include His-164 and Glu-173. Residue Glu-216 is the Proton donor of the active site. Mg(2+)-binding residues include Asp-251, Glu-302, and Asp-329. Residues Glu-302 and Asp-329 each coordinate substrate. The active-site Proton acceptor is the Lys-354. Residues 381 to 384 (SHRS) and Lys-405 each bind substrate.

Belongs to the enolase family. Homodimer. Mg(2+) serves as cofactor.

The protein localises to the cytoplasm. It catalyses the reaction (2R)-2-phosphoglycerate = phosphoenolpyruvate + H2O. Its pathway is carbohydrate degradation; glycolysis; pyruvate from D-glyceraldehyde 3-phosphate: step 4/5. In Zea mays (Maize), this protein is Enolase 1 (ENO1).